The chain runs to 283 residues: Polyamine aminopropyltransferase (283 aa).

One can recognise a PABS domain in the interval 5–238 (QTWIDEYHKG…GIWSWTFASS (234 aa)). Q32 provides a ligand contact to S-methyl-5'-thioadenosine. Residues H63 and D87 each contribute to the spermidine site. S-methyl-5'-thioadenosine-binding positions include E107 and 139–140 (DG). D158 (proton acceptor) is an active-site residue. Spermidine is bound at residue 158-161 (DCSD).

It belongs to the spermidine/spermine synthase family. As to quaternary structure, homodimer or homotetramer.

The protein localises to the cytoplasm. It carries out the reaction S-adenosyl 3-(methylsulfanyl)propylamine + putrescine = S-methyl-5'-thioadenosine + spermidine + H(+). The protein operates within amine and polyamine biosynthesis; spermidine biosynthesis; spermidine from putrescine: step 1/1. Its function is as follows. Catalyzes the irreversible transfer of a propylamine group from the amino donor S-adenosylmethioninamine (decarboxy-AdoMet) to putrescine (1,4-diaminobutane) to yield spermidine. The chain is Polyamine aminopropyltransferase from Prochlorococcus marinus (strain MIT 9301).